The sequence spans 346 residues: Probable RNA methyltransferase PSPA7_3453 (346 aa).

Glu-91 (proton acceptor) is an active-site residue. Residues 94-320 (LLPRGGLCVS…TKVRNSAGQD (227 aa)) enclose the Radical SAM core domain. Cysteines 101 and 325 form a disulfide. 3 residues coordinate [4Fe-4S] cluster: Cys-108, Cys-112, and Cys-115. Residues 153–154 (GE), Ser-183, 206–208 (SLH), and Asn-282 each bind S-adenosyl-L-methionine. The active-site S-methylcysteine intermediate is the Cys-325.

It belongs to the radical SAM superfamily. RlmN family. The cofactor is [4Fe-4S] cluster.

The protein resides in the cytoplasm. This chain is Probable RNA methyltransferase PSPA7_3453, found in Pseudomonas paraeruginosa (strain DSM 24068 / PA7) (Pseudomonas aeruginosa (strain PA7)).